The following is a 122-amino-acid chain: Large ribosomal subunit protein uL18 (122 aa).

This sequence belongs to the universal ribosomal protein uL18 family. Part of the 50S ribosomal subunit; part of the 5S rRNA/L5/L18/L25 subcomplex. Contacts the 5S and 23S rRNAs.

Functionally, this is one of the proteins that bind and probably mediate the attachment of the 5S RNA into the large ribosomal subunit, where it forms part of the central protuberance. This Synechococcus sp. (strain JA-3-3Ab) (Cyanobacteria bacterium Yellowstone A-Prime) protein is Large ribosomal subunit protein uL18.